Reading from the N-terminus, the 141-residue chain is MTIMVEDIMKLLCSLSGERKMKAAVKHSGKGALVTGAMAFVGGLVGGPPGLAVGGAVGGLLGAWMTSGQFKPVPQILMELPPAEQQRLFNEAAAIIRHLEWTDAVQLTALVMGSEALQQQLLAMLVNYVTKELRAEIQYDD.

A helical transmembrane segment spans residues 40–60 (FVGGLVGGPPGLAVGGAVGGL).

It belongs to the C19orf12 family.

The protein resides in the mitochondrion. It localises to the mitochondrion membrane. Its subcellular location is the endoplasmic reticulum. The protein localises to the cytoplasm. It is found in the cytosol. The polypeptide is Protein C19orf12 (C19orf12) (Homo sapiens (Human)).